The primary structure comprises 814 residues: Dimethyl sulfoxide reductase DmsA (814 aa).

Residues 1–45 constitute a signal peptide (tat-type signal); it reads MKTKIPDAVLAAEVSRRGLVKTTAIGGLAMASSALTLPFSRIAHA. In terms of domain architecture, 4Fe-4S Mo/W bis-MGD-type spans 56–118; that stretch reads EKVIWSACTV…SMRRRVYNPD (63 aa). [4Fe-4S] cluster is bound by residues Cys63, Cys67, Cys71, and Cys104. Mo-bis(molybdopterin guanine dinucleotide)-binding positions include 172–176, Ser205, 244–245, 270–271, 291–293, 386–387, Arg390, Asn488, 512–513, His701, 707–709, Asn788, and 804–805; these read LGGTM, ET, ID, GTD, WG, HST, and SH.

This sequence belongs to the prokaryotic molybdopterin-containing oxidoreductase family. As to quaternary structure, heterotrimeric enzyme composed of a catalytic heterodimer (DmsAB) and a membrane anchor protein (DmsC). It depends on [4Fe-4S] cluster as a cofactor. Mo-bis(molybdopterin guanine dinucleotide) serves as cofactor. In terms of processing, exported by the Tat system. The position of the signal peptide cleavage has been experimentally proven. Can also be exported by the Sec system.

It is found in the cell membrane. It carries out the reaction dimethyl sulfide + a menaquinone + H2O = dimethyl sulfoxide + a menaquinol. With respect to regulation, inhibited by dithionite, sodium hydrogensulfite and tungstate. Catalyzes the reduction of dimethyl sulfoxide (DMSO) to dimethyl sulfide (DMS). DMSO reductase serves as the terminal reductase under anaerobic conditions, with DMSO being the terminal electron acceptor. Terminal reductase during anaerobic growth on various sulfoxides and N-oxide compounds. Allows E.coli to grow anaerobically on DMSO as respiratory oxidant. This Escherichia coli (strain K12) protein is Dimethyl sulfoxide reductase DmsA (dmsA).